We begin with the raw amino-acid sequence, 555 residues long: Cilia- and flagella-associated protein 184 (555 aa).

Positions 1-12 (MDVSSEHTKDPG) are enriched in basic and acidic residues. The disordered stretch occupies residues 1–202 (MDVSSEHTKD…KSQEEGKRLY (202 aa)). 2 stretches are compositionally biased toward acidic residues: residues 41–54 (GELE…EEEQ) and 95–105 (PEPEEPAEVGA). A compositionally biased stretch (low complexity) spans 106–117 (EEPAQPEPGAGP). Over residues 118-131 (EELEAEAGAEELEQ) the composition is skewed to acidic residues. Residues 174–202 (ETQRDGAESKERDGEGRPAKSQEEGKRLY) show a composition bias toward basic and acidic residues. Coiled coils occupy residues 305-441 (YHQE…NSVQ) and 505-531 (DSLL…LKRH).

Belongs to the CFAP184 family. As to quaternary structure, forms a complex with CFAP263; the interaction is required for functional activity in cilia.

Its subcellular location is the cell projection. It localises to the cilium. The protein resides in the cytoplasm. The protein localises to the cytoskeleton. It is found in the microtubule organizing center. Its subcellular location is the centrosome. Its function is as follows. In complex with CFAP263, acts as a regulator of ciliary beating that connects radial spoke 3 (RS3) to the inner dynein arm (IDA) and the nexin-dynein regulatory complex (N-DRC). The complex is positioned parallel to N-DRC and forms a connection between the arch at the base of RS3, the IDA tail and N-DRC. The chain is Cilia- and flagella-associated protein 184 from Homo sapiens (Human).